The following is a 306-amino-acid chain: Non-specific ribonucleoside hydrolase RihC (306 aa).

The active site involves His235.

This sequence belongs to the IUNH family. RihC subfamily.

In terms of biological role, hydrolyzes both purine and pyrimidine ribonucleosides with a broad-substrate specificity. In Salmonella heidelberg (strain SL476), this protein is Non-specific ribonucleoside hydrolase RihC.